A 386-amino-acid chain; its full sequence is Skeletal aspartic acid-rich protein 1 (386 aa).

Positions 1 to 24 (MAFVSCFHLRLLFLCLALFMAAEC) are cleaved as a signal peptide. Disordered regions lie at residues 33 to 145 (VDSD…PFSL) and 244 to 291 (EVTD…DCPH). Residues 63–107 (YDASDDNDNDNDDDDNNDNDNDNDDDNDVDRDNDNDDDDFDDSND) are compositionally biased toward acidic residues. Composition is skewed to basic and acidic residues over residues 133 to 142 (HSVESFEDRP) and 244 to 265 (EVTD…KDTP). Residues 266–288 (DTDSDPDDSSDNANDGDDDDDDD) show a composition bias toward acidic residues.

As to expression, component of the acid-insoluble and acid-soluble organic matrix of the aragonitic skeleton (at protein level).

Its subcellular location is the secreted. This chain is Skeletal aspartic acid-rich protein 1, found in Acropora millepora (Staghorn coral).